Reading from the N-terminus, the 239-residue chain is Aspartate/glutamate leucyltransferase (239 aa).

It belongs to the R-transferase family. Bpt subfamily.

It localises to the cytoplasm. The catalysed reaction is N-terminal L-glutamyl-[protein] + L-leucyl-tRNA(Leu) = N-terminal L-leucyl-L-glutamyl-[protein] + tRNA(Leu) + H(+). It catalyses the reaction N-terminal L-aspartyl-[protein] + L-leucyl-tRNA(Leu) = N-terminal L-leucyl-L-aspartyl-[protein] + tRNA(Leu) + H(+). Functions in the N-end rule pathway of protein degradation where it conjugates Leu from its aminoacyl-tRNA to the N-termini of proteins containing an N-terminal aspartate or glutamate. This Campylobacter jejuni subsp. jejuni serotype O:2 (strain ATCC 700819 / NCTC 11168) protein is Aspartate/glutamate leucyltransferase.